A 1046-amino-acid polypeptide reads, in one-letter code: Nuclear pore complex protein NUP96 (1046 aa).

Residues Ser-51 to Phe-187 form the Peptidase S59 domain. Over residues Arg-283–Asn-295 the composition is skewed to polar residues. A disordered region spans residues Arg-283–Val-304. At Ser-523 the chain carries Phosphoserine.

In terms of assembly, part of the nuclear pore complex (NPC). The NPC has an eight-fold symmetrical structure comprising a central transport channel and two rings, the cytoplasmic and nuclear rings, to which eight filaments are attached. The cytoplasmic filaments have loose ends, while the nuclear filaments are joined in a distal ring, forming a nuclear basket. NPCs are highly dynamic in configuration and composition, and can be devided in 3 subcomplexes, the NUP62 subcomplex, the NUP107-160 subcomplex and the NUP93 subcomplex, containing approximately 30 different nucleoporin proteins. In terms of tissue distribution, expressed in roots, leaves, stems, flowers and siliques.

The protein resides in the nucleus membrane. Its subcellular location is the nucleus. It localises to the nuclear pore complex. Contributes to the transfer of mature mRNA from the nucleus to the cytosol. Required for both R gene-mediated and basal disease resistance. RNA export seems to play a critical role in stress responses and regulation of plant growth and development. This Arabidopsis thaliana (Mouse-ear cress) protein is Nuclear pore complex protein NUP96.